We begin with the raw amino-acid sequence, 140 residues long: NADPH-dependent 7-cyano-7-deazaguanine reductase (140 aa).

C51 acts as the Thioimide intermediate in catalysis. Residue D58 is the Proton donor of the active site. Substrate contacts are provided by residues 73–75 (LES) and 92–93 (HE).

It belongs to the GTP cyclohydrolase I family. QueF type 1 subfamily.

It is found in the cytoplasm. It catalyses the reaction 7-aminomethyl-7-carbaguanine + 2 NADP(+) = 7-cyano-7-deazaguanine + 2 NADPH + 3 H(+). The protein operates within tRNA modification; tRNA-queuosine biosynthesis. In terms of biological role, catalyzes the NADPH-dependent reduction of 7-cyano-7-deazaguanine (preQ0) to 7-aminomethyl-7-deazaguanine (preQ1). This is NADPH-dependent 7-cyano-7-deazaguanine reductase from Syntrophus aciditrophicus (strain SB).